Reading from the N-terminus, the 518-residue chain is Ribonuclease Y (518 aa).

The chain crosses the membrane as a helical span at residues 2–22 (GSIIISALLALVIGAVVGFFV). A KH domain is found at 208–271 (TVSVVNLPND…ETARIALDKL (64 aa)). The HD domain maps to 334-427 (VLKHSVEVAF…VAAADALSAA (94 aa)).

The protein belongs to the RNase Y family.

The protein localises to the cell membrane. Its function is as follows. Endoribonuclease that initiates mRNA decay. The polypeptide is Ribonuclease Y (Geobacillus thermodenitrificans (strain NG80-2)).